Reading from the N-terminus, the 424-residue chain is E3 ubiquitin-protein ligase RNF26 (424 aa).

5 helical membrane passes run 24 to 44 (LNFL…AFIY), 60 to 80 (GFLL…FGGL), 157 to 177 (ISTQ…TGPL), 183 to 203 (VVAA…ILLW), and 224 to 244 (VVFH…ILIV). An RING-type zinc finger spans residues 371–413 (CVICQDQSKTVLLLPCRHLCLCQACTEILMRHPVYHRNCPLCR).

Interacts with INCA1. Interacts with TMEM43, ENDOD1, TMEM33 and TMED1 to form a complex capable of modulating innate immune signaling through the cGAS-STING pathway. Interacts with UBE2J1; this interaction is important for SQSTM1 ubiquitination.

The protein resides in the endoplasmic reticulum membrane. The catalysed reaction is S-ubiquitinyl-[E2 ubiquitin-conjugating enzyme]-L-cysteine + [acceptor protein]-L-lysine = [E2 ubiquitin-conjugating enzyme]-L-cysteine + N(6)-ubiquitinyl-[acceptor protein]-L-lysine.. Its pathway is protein modification; protein ubiquitination. Functionally, E3 ubiquitin-protein ligase that plays a key role in endosome organization by retaining vesicles in the perinuclear cloud. Acts as a platform for perinuclear positioning of the endosomal system by mediating ubiquitination of SQSTM1 through interaction with the ubiquitin conjugating enzyme UBE2J1. Ubiquitinated SQSTM1 attracts specific vesicle-associated adapters, forming a molecular bridge that restrains cognate vesicles in the perinuclear region and organizes the endosomal pathway for efficient cargo transport. Also acts as a regulator of type I interferon production in response to viral infection by mediating the formation of 'Lys-11'-linked polyubiquitin chains on TMEM173/STING, leading to stabilize TMEM173/STING. Also required to limit type I interferon response by promoting autophagic degradation of IRF3. The polypeptide is E3 ubiquitin-protein ligase RNF26 (Mus musculus (Mouse)).